The following is a 99-amino-acid chain: MDSSRKYKRCGFGAALFVANIFFSLLSLHCISGAHGHQQRMKESVMGSEPPVCATKCRNCKPCLPYLFDIRGAHDDDDDSEPYYPVKWICRCRDRVFEP.

Positions 1 to 35 (MDSSRKYKRCGFGAALFVANIFFSLLSLHCISGAH) are cleaved as a signal peptide. Disulfide bonds link C53–C90, C57–C63, and C60–C92.

It belongs to the plant cysteine rich small secretory peptide family. Epidermal patterning factor subfamily.

It localises to the secreted. Functionally, controls stomatal patterning. This Arabidopsis thaliana (Mouse-ear cress) protein is EPIDERMAL PATTERNING FACTOR-like protein 8.